Here is a 92-residue protein sequence, read N- to C-terminus: Small cysteine and glycine repeat-containing protein 9 (92 aa).

The 11 X 2 AA repeats of CG stretch occupies residues 4–72 (CGCGSCGCSG…CCRRTCSSCG (69 aa)).

It belongs to the KRTAP type 28 family.

In terms of biological role, in the hair cortex, hair keratin intermediate filaments are embedded in an interfilamentous matrix, consisting of hair keratin-associated proteins (KRTAP), which are essential for the formation of a rigid and resistant hair shaft through their extensive disulfide bond cross-linking with abundant cysteine residues of hair keratins. The matrix proteins include the high-sulfur and high-glycine-tyrosine keratins. The polypeptide is Small cysteine and glycine repeat-containing protein 9 (Homo sapiens (Human)).